Consider the following 387-residue polypeptide: Succinate--CoA ligase [ADP-forming] subunit beta (387 aa).

Residues K46, G53 to G55, E99, A102, and E107 contribute to the ATP site. Positions 199 and 213 each coordinate Mg(2+). Substrate contacts are provided by residues N264 and G321–V323.

The protein belongs to the succinate/malate CoA ligase beta subunit family. In terms of assembly, heterotetramer of two alpha and two beta subunits. Mg(2+) serves as cofactor.

It catalyses the reaction succinate + ATP + CoA = succinyl-CoA + ADP + phosphate. It carries out the reaction GTP + succinate + CoA = succinyl-CoA + GDP + phosphate. The protein operates within carbohydrate metabolism; tricarboxylic acid cycle; succinate from succinyl-CoA (ligase route): step 1/1. Succinyl-CoA synthetase functions in the citric acid cycle (TCA), coupling the hydrolysis of succinyl-CoA to the synthesis of either ATP or GTP and thus represents the only step of substrate-level phosphorylation in the TCA. The beta subunit provides nucleotide specificity of the enzyme and binds the substrate succinate, while the binding sites for coenzyme A and phosphate are found in the alpha subunit. This chain is Succinate--CoA ligase [ADP-forming] subunit beta, found in Campylobacter jejuni (strain RM1221).